We begin with the raw amino-acid sequence, 439 residues long: MLATEQSRPAECNGAHAHEKTEEVKKPLYSRPVVLTTYPSQSRIDPFPMNWGAATAEERGPITVARSIETLPHRNAVGAHGGSYSVYNALAVAGGFLPPDHRPNFELTEPTFDFPELDSWHDPKKIVAMDPYGHLTPSVFKKYLDEGYDVRPTIAITRAHLQVTEIQRSVENGSLPIDGKIVLNEKGDIAVTKVAVEPVWYLPGVAERFGVDEVTLRRALFEQMGGAYPELITRPDIKVFLPPIGGLTAYIFGPPEYLSDTSKSLAVRVHDECNGSDVFQSDICTCRPYLTFGIEEAAKEAQNGGAGLVVYFRKEGRALGEVVKYLVYNKRKRTGDSAENYFKRTEELAGVRDMRFQALMPDILHWFGIKKIDRMLSMSNMKHDAIVGQGIKILNRITIPDDLIPEDSQVEIDAKIQSGYFSEKKVTEDDLSCVHGRHW.

The tract at residues Met1 to Val24 is disordered. Arg268–Glu272 is a GTP binding site. 3 residues coordinate Zn(2+): Cys273, Cys284, and Cys286. Residue Glu315–Arg317 coordinates GTP. Asp353 serves as the catalytic Proton acceptor. Arg355 acts as the Nucleophile in catalysis. GTP contacts are provided by Ser377 and Lys382.

It belongs to the GTP cyclohydrolase II family.

Its subcellular location is the cytoplasm. It is found in the nucleus. In Schizosaccharomyces pombe (strain 972 / ATCC 24843) (Fission yeast), this protein is Uracil-regulated protein 1 (urg1).